Reading from the N-terminus, the 756-residue chain is Probable chemoreceptor y4sI (756 aa).

The next 2 helical transmembrane spans lie at 26–46 (VCVA…TSVA) and 330–350 (LIKI…MAIL). 2 HAMP domains span residues 353-406 (RSIS…ARVA) and 434-486 (DEQA…ETIR). The 230-residue stretch at 491–720 (QAASMSSIVS…ESDAACRSLN (230 aa)) folds into the Methyl-accepting transducer domain. Residues 736–756 (GGGSSTRQPQSPPTQRYFMSR) are disordered.

It belongs to the methyl-accepting chemotaxis (MCP) protein family.

It localises to the cell membrane. In terms of biological role, chemotactic-signal transducers respond to changes in the concentration of attractants and repellents in the environment, transduce a signal from the outside to the inside of the cell, and facilitate sensory adaptation through the variation of the level of methylation. Attractants increase the level of methylation while repellents decrease the level of methylation. The chain is Probable chemoreceptor y4sI from Sinorhizobium fredii (strain NBRC 101917 / NGR234).